The primary structure comprises 489 residues: Lysine--tRNA ligase (489 aa).

Residues glutamate 399 and glutamate 406 each contribute to the Mg(2+) site.

This sequence belongs to the class-II aminoacyl-tRNA synthetase family. In terms of assembly, homodimer. The cofactor is Mg(2+).

The protein localises to the cytoplasm. It catalyses the reaction tRNA(Lys) + L-lysine + ATP = L-lysyl-tRNA(Lys) + AMP + diphosphate. In Roseiflexus castenholzii (strain DSM 13941 / HLO8), this protein is Lysine--tRNA ligase.